A 483-amino-acid polypeptide reads, in one-letter code: Essential nuclear protein 1 (483 aa).

4 disordered regions span residues 1-21 (MARASSTKARKQRHDPLLKDL), 33-55 (KKKLAQNDAANHDAANEEDGYID), 67-123 (KEQQ…EGDY), and 171-200 (ESQVEDMQDDEPLANEQNTSRGNISSGLKS). The span at 96-123 (YDDEDEDEDEDEEAFGEDISDFEPEGDY) shows a compositional bias: acidic residues. S172 carries the phosphoserine; by ATM or ATR modification. A compositionally biased stretch (acidic residues) spans 174–183 (VEDMQDDEPL). Over residues 185 to 198 (NEQNTSRGNISSGL) the composition is skewed to polar residues. A phosphoserine mark is found at S190 and S404.

It belongs to the bystin family.

The protein localises to the cytoplasm. The protein resides in the nucleus. It is found in the nucleolus. In terms of biological role, required for normal export of the pre-40S particles from the nucleus to the cytoplasm. Its subcellular location and association with pre-40S subunit shifts from mixed cytoplasm/nucleus to all nuclear in RPS19 disruptions, suggesting it acts after the ribosomal protein. This Saccharomyces cerevisiae (strain ATCC 204508 / S288c) (Baker's yeast) protein is Essential nuclear protein 1 (ENP1).